We begin with the raw amino-acid sequence, 140 residues long: Large ribosomal subunit protein uL11 (140 aa).

Belongs to the universal ribosomal protein uL11 family. As to quaternary structure, part of the ribosomal stalk of the 50S ribosomal subunit. Interacts with L10 and the large rRNA to form the base of the stalk. L10 forms an elongated spine to which L12 dimers bind in a sequential fashion forming a multimeric L10(L12)X complex. One or more lysine residues are methylated.

Functionally, forms part of the ribosomal stalk which helps the ribosome interact with GTP-bound translation factors. This chain is Large ribosomal subunit protein uL11, found in Halothermothrix orenii (strain H 168 / OCM 544 / DSM 9562).